The primary structure comprises 266 residues: Probable catechol O-methyltransferase 1 (266 aa).

Positions 56, 78, 86, 106, 107, 135, and 162 each coordinate S-adenosyl-L-methionine. Position 162 (Asp-162) interacts with Mg(2+). Lys-165 provides a ligand contact to substrate. Residues Asp-190 and Asn-191 each contribute to the Mg(2+) site. A substrate-binding site is contributed by Asn-191.

The protein belongs to the class I-like SAM-binding methyltransferase superfamily. Cation-dependent O-methyltransferase family. Requires Mg(2+) as cofactor.

It is found in the cytoplasm. It localises to the nucleus. The catalysed reaction is a catechol + S-adenosyl-L-methionine = a guaiacol + S-adenosyl-L-homocysteine + H(+). The protein is Probable catechol O-methyltransferase 1 of Schizosaccharomyces pombe (strain 972 / ATCC 24843) (Fission yeast).